Here is a 962-residue protein sequence, read N- to C-terminus: CRACD-like protein (962 aa).

3 disordered regions span residues 38-102 (GKKK…PESG), 131-174 (NVKM…HDVG), and 212-871 (PAES…QEPV). Residues 46 to 61 (PSSTGSSTWKQSQTRN) show a composition bias toward polar residues. Ser92 is modified (phosphoserine). The span at 224 to 244 (AKHKLQVKPRNQRSSKMRRLS) shows a compositional bias: basic residues. Over residues 245–256 (SRAQSESLSDLT) the composition is skewed to polar residues. Residues 266 to 278 (EKPLLEVSPEERP) show a composition bias toward basic and acidic residues. Composition is skewed to pro residues over residues 292 to 303 (EPGPPAPLPPPG) and 354 to 365 (PPSPPEGPPNPG). The span at 407–425 (PEGDTTPPETDPAATSEAP) shows a compositional bias: low complexity. Basic and acidic residues-rich tracts occupy residues 429-440 (DGPERSVPKEAE) and 459-480 (EPER…ERIG). A Phosphoserine modification is found at Ser490. A compositionally biased stretch (low complexity) spans 503-521 (AAASEGPAASPPLAAAESP). Basic and acidic residues-rich tracts occupy residues 536–546 (APERPKAERAE), 555–570 (AAPE…ELRG), 631–642 (KLAERGPQDSGD), and 709–728 (YSAE…EEKC). The span at 753-764 (PEPLSSKPPLPR) shows a compositional bias: pro residues. Basic and acidic residues-rich tracts occupy residues 784-806 (PGER…RGAE) and 844-869 (QEDK…RGQE).

The polypeptide is CRACD-like protein (Homo sapiens (Human)).